We begin with the raw amino-acid sequence, 366 residues long: Flagellar P-ring protein (366 aa).

The signal sequence occupies residues 1 to 20 (MVIKFLSALILLLVTTAAQA).

This sequence belongs to the FlgI family. As to quaternary structure, the basal body constitutes a major portion of the flagellar organelle and consists of four rings (L,P,S, and M) mounted on a central rod.

Its subcellular location is the periplasm. It is found in the bacterial flagellum basal body. Assembles around the rod to form the L-ring and probably protects the motor/basal body from shearing forces during rotation. This chain is Flagellar P-ring protein, found in Escherichia coli (strain SE11).